A 236-amino-acid chain; its full sequence is Small ribosomal subunit protein uS3 (236 aa).

A KH type-2 domain is found at Ile39–His107. Residues Glu216–Ala236 are disordered.

It belongs to the universal ribosomal protein uS3 family. Part of the 30S ribosomal subunit. Forms a tight complex with proteins S10 and S14.

Functionally, binds the lower part of the 30S subunit head. Binds mRNA in the 70S ribosome, positioning it for translation. The chain is Small ribosomal subunit protein uS3 from Bartonella henselae (strain ATCC 49882 / DSM 28221 / CCUG 30454 / Houston 1) (Rochalimaea henselae).